The primary structure comprises 122 residues: Spermidine export protein MdtJ (122 aa).

4 helical membrane-spanning segments follow: residues 1-21 (MIYW…TLSM), 31-51 (TGHI…SMAV), 54-74 (VALG…ITLF), and 81-101 (EPIS…IMLV).

This sequence belongs to the drug/metabolite transporter (DMT) superfamily. Small multidrug resistance (SMR) (TC 2.A.7.1) family. MdtJ subfamily. Forms a complex with MdtI.

The protein localises to the cell inner membrane. Catalyzes the excretion of spermidine. The protein is Spermidine export protein MdtJ of Serratia proteamaculans (strain 568).